Consider the following 409-residue polypeptide: Broad specificity amino-acid racemase (409 aa).

The signal sequence occupies residues 1–24; that stretch reads MPFRRTLLAASLVLLITGQAPLYA. Cys71 and Cys97 form a disulfide bridge. Lys75 acts as the Proton acceptor in catalysis. Lys75 is subject to N6-(pyridoxal phosphate)lysine. Residue Arg174 coordinates substrate. The active-site Proton acceptor is Tyr301. A substrate-binding site is contributed by Met349.

It belongs to the alanine racemase family. Bsr subfamily. Monomer. Forms a head-to-tail homodimer in the structure. Requires pyridoxal 5'-phosphate as cofactor.

The protein resides in the periplasm. It catalyses the reaction an L-alpha-amino acid = a D-alpha-amino acid. The enzyme catalyses L-lysine = D-lysine. The catalysed reaction is L-arginine = D-arginine. It carries out the reaction L-alanine = D-alanine. With respect to regulation, activity is enhanced by Co(2+), Mn(2+) and Sr(2+), and decreased by Cu(2+). Its function is as follows. Amino-acid racemase that catalyzes the interconversion of L-lysine and D-lysine, and L-arginine and D-arginine. To a lesser extent, is also able to interconvert alanine and isoleucine enantiomers. In Pseudomonas putida (Arthrobacter siderocapsulatus), this protein is Broad specificity amino-acid racemase.